The sequence spans 458 residues: Exodeoxyribonuclease 7 large subunit (458 aa).

Belongs to the XseA family. As to quaternary structure, heterooligomer composed of large and small subunits.

The protein resides in the cytoplasm. It carries out the reaction Exonucleolytic cleavage in either 5'- to 3'- or 3'- to 5'-direction to yield nucleoside 5'-phosphates.. In terms of biological role, bidirectionally degrades single-stranded DNA into large acid-insoluble oligonucleotides, which are then degraded further into small acid-soluble oligonucleotides. The polypeptide is Exodeoxyribonuclease 7 large subunit (Yersinia enterocolitica serotype O:8 / biotype 1B (strain NCTC 13174 / 8081)).